A 100-amino-acid chain; its full sequence is uncharacterized protein (100 aa).

The N-terminal stretch at 1-17 is a signal peptide; that stretch reads MIMKYFCTVMIAIALVG. A lipid anchor (N-palmitoyl cysteine) is attached at C18. A lipid anchor (S-diacylglycerol cysteine) is attached at C18.

Its subcellular location is the cell membrane. This is an uncharacterized protein from Salmonella typhi.